The sequence spans 1969 residues: MPGEQMDPTGSQLDSDFSQQDTPCLIIEDSQPESQVLEEDAGSHFSVLSRHLPNLQMHKENPVLDIVSNPEQSAVEQGDSNSSFNEHLKEKKASDPVESSHLGTSGSISQVIERLPQPNRTSSALAVTVEAASLPEEEKEEEELEEEKEGVGANAPGADSLAAEDSASSQLGFGVLELSQSQDVEEHTVPYDVNQEHLQLVTTNSGSSPLSDVDASTAIKCEEQPTEDIAMIEQPSKDIPVTVQPGKGIHVVEEQNLPLVRSEDRPSSPQVSVAAVETKEQVPARELLEEGPQVQPSSEPEVSSTQEDLFDQSSKTASDGCSTPSREEGGCSPVSTPATTLQLLQLSGQKPLVQESLSTNSSDLVAPSPDAFRSTPFIVPSSPTEQGGRKDEPMDMSVIPVGGEPFQKLHDDEAMETEKPLLPSQPAVSPQASTPVSRSTPVFTPGSLPIPSQPEFSHDIFIPSPSLEEPSDDVKKGGGLHSSSLTVECSKTSESEPKNFTDDLGLSMTGDSCKLMLSTSEYSQSSKMESLGSPRTEEDRENTQIDDTEPLSPVSNSKLPADSENVLVTPSQDDQVEMSQNVDKAKEDETEDRGDCKGREDAVAEDVCIDLTCDSGSQAVPSPATRSEALSSVLDQEEAMDTKEHHPEEGFSGSEVEEVPETPCGSHREEPKEEPMESIPLHLSLTETQSEALCLQKEAPKEECPEAMEVETSVISIDSPQKLQVLDQELEHKDPDTWEEATSEDSSVVIVDVKEPSPRADVSCEPLEEVEKCSDSQSWEGVAPEEEPCAENRLDTPEEKRIECDGDSKAETTEKDAVTEDSPQPPLPSVRDEPVRPDQETQQPQVQEKESPVTVDAEVADDKQLGPEGACQQLEKAPACASQSFCESSSETPFHFTLPKEGDIIPPLTGATPPLIGHLKLEPKRHSTPIGISNYPESTIATSDVTSESMVEINDPLLGNEKGDSESAPEMDGKLSLKMKLVSPETEASEESLQFSLEKPTTAERKNGSTAIAEPVASLQKPVPVFGCIYEAQQEKEAQSEAPPSAPDRANLLHFPSAQEEDKERPDVTPKLRQSEQPVKPVGPVMDDAAPEDSASPVSQQRASQEQRASQEPFSPAEDVMETDLLEGLAANQDRPSKMLMDRPTQSNIGIQTVDHSLCAPETVSAATQTVKSVCEQGTSTAEQNSGKQDATVQTERGSGEKPASAPVDDTESLHSQGEEEFEMPQPPHGHVLHRHMRTIREVRTLVTRVITDVYYVDGTEVERKVTEETEEPIVECQECETEVSPSQTGGSSGDLGDISSFSSKASSSHHTSSGTSLSAIHSSGSSGRGAGPLKGKASGTEAADFALPSSRGGPGKLSPRKGISQTGAPVCEEDGDAGLGIRQGGKAPVTPRGRGRRGRPPSRTTGTRETVVSGPLGVEDISPSMSPDDKSFTRIMPRVPDSTKRTDASSSTLRRSDSPEIPFQAATGSSDGLDSSSSGNSFVGLRVVAKWSSNGYFYSGKITRDVGAGKYKLLFDDGYECDVLGKDILLCDPIPLDTEVTALSEDEYFSAGVVKGHRKESGELYYSIEKEGQRKWYKRMAVILSLEQGNRLREQYGLGPYEAVTPLTKAADISLDNLVEGKRKRRSNISSPVTPTAASSSSTTPTRKATESPRASTGVPSGKRKLPTSEEERSPAKRGRKSATVKPGTVGAAEFVSPCETGDNIGEPSVLEEPRGPLPLNKTLFLGYAFLLTMATTSDKLASRSKLLDGPTGSSEEEEEFLEIPPFNKQYTECQLRAGAGYILEDFNEAQCNTAYQCLLIADQHCRTRKYFLCLASGIPCVSHVWVHDSCHANQLQNYRNYLLPAGYSLEEQRILDWQPRENPFQNLKVLLVSDQQQNFLELWSEILMTGGAASVKQHHSSAHNKDIALGVFDVVVTDPSCPASVLKCAEALQLPVVSQEWVIQCLIVGERIGFKQHPKYKHDYVSH.

Positions 1-24 (MPGEQMDPTGSQLDSDFSQQDTPC) are disordered. Residues 8 to 22 (PTGSQLDSDFSQQDT) show a composition bias toward polar residues. A phosphoserine mark is found at serine 30, serine 68, and serine 73. Residues 67 to 168 (VSNPEQSAVE…DSLAAEDSAS (102 aa)) are disordered. The segment covering 69–85 (NPEQSAVEQGDSNSSFN) has biased composition (polar residues). Basic and acidic residues predominate over residues 86–95 (EHLKEKKASD). The segment covering 101–110 (HLGTSGSISQ) has biased composition (polar residues). The residue at position 109 (serine 109) is a Phosphoserine. Residues 135–148 (PEEEKEEEELEEEK) are compositionally biased toward acidic residues. Residues 158-168 (ADSLAAEDSAS) are compositionally biased toward low complexity. Phosphoserine is present on residues serine 169, serine 179, and serine 181. Residue lysine 220 forms a Glycyl lysine isopeptide (Lys-Gly) (interchain with G-Cter in SUMO1); alternate linkage. Residue lysine 220 forms a Glycyl lysine isopeptide (Lys-Gly) (interchain with G-Cter in SUMO2); alternate linkage. Disordered stretches follow at residues 254–337 (EQNL…VSTP), 352–599 (LVQE…CKGR), and 614–707 (DSGS…CPEA). Phosphoserine is present on residues serine 267 and serine 268. A compositionally biased stretch (basic and acidic residues) spans 277–288 (ETKEQVPARELL). Positions 294–324 (VQPSSEPEVSSTQEDLFDQSSKTASDGCSTP) are enriched in polar residues. Serine 297 is subject to Phosphoserine. Phosphothreonine is present on threonine 305. Serine 368, serine 382, and serine 397 each carry phosphoserine. Basic and acidic residues predominate over residues 407 to 419 (QKLHDDEAMETEK). Over residues 426-442 (PAVSPQASTPVSRSTPV) the composition is skewed to polar residues. Residues serine 429, serine 452, and serine 464 each carry the phosphoserine modification. Over residues 481–490 (HSSSLTVECS) the composition is skewed to polar residues. Positions 491–501 (KTSESEPKNFT) are enriched in basic and acidic residues. Phosphoserine occurs at positions 507, 518, 523, and 525. The span at 517–528 (LSTSEYSQSSKM) shows a compositional bias: polar residues. Phosphothreonine is present on residues threonine 543 and threonine 548. Residues serine 552 and serine 579 each carry the phosphoserine modification. The span at 566–582 (VLVTPSQDDQVEMSQNV) shows a compositional bias: polar residues. A compositionally biased stretch (basic and acidic residues) spans 583 to 599 (DKAKEDETEDRGDCKGR). Positions 614–634 (DSGSQAVPSPATRSEALSSVL) are enriched in polar residues. Serine 622, serine 627, serine 631, and serine 632 each carry phosphoserine. The span at 640–649 (MDTKEHHPEE) shows a compositional bias: basic and acidic residues. Threonine 662 carries the post-translational modification Phosphothreonine. Residues 666–675 (SHREEPKEEP) show a composition bias toward basic and acidic residues. 4 positions are modified to phosphoserine: serine 684, serine 716, serine 719, and serine 763. The segment at 754-870 (KEPSPRADVS…DDKQLGPEGA (117 aa)) is disordered. A compositionally biased stretch (basic and acidic residues) spans 790-818 (AENRLDTPEEKRIECDGDSKAETTEKDAV). Serine 822 bears the Phosphoserine mark. The segment covering 830–839 (VRDEPVRPDQ) has biased composition (basic and acidic residues). Threonine 912 is modified (phosphothreonine). A Glycyl lysine isopeptide (Lys-Gly) (interchain with G-Cter in SUMO2) cross-link involves residue lysine 920. Residues 927–1017 (STPIGISNYP…GSTAIAEPVA (91 aa)) are disordered. Residues 935-949 (YPESTIATSDVTSES) are compositionally biased toward polar residues. Basic and acidic residues predominate over residues 961-975 (EKGDSESAPEMDGKL). Serine 965 carries the phosphoserine modification. Lysine 974 is covalently cross-linked (Glycyl lysine isopeptide (Lys-Gly) (interchain with G-Cter in SUMO2)). Residue serine 1018 is modified to Phosphoserine. 3 disordered regions span residues 1034-1144 (QEKE…MDRP), 1178-1231 (GTST…PHGH), and 1267-1478 (TEET…DSSS). Residues 1060 to 1074 (EEDKERPDVTPKLRQ) are compositionally biased toward basic and acidic residues. 2 positions are modified to phosphoserine: serine 1075 and serine 1096. The segment covering 1099-1112 (SQQRASQEQRASQE) has biased composition (low complexity). Serine 1115 is modified (phosphoserine). A compositionally biased stretch (polar residues) spans 1178-1197 (GTSTAEQNSGKQDATVQTER). Phosphothreonine is present on threonine 1211. A phosphoserine mark is found at serine 1213 and serine 1216. Residues 1269–1282 (ETEEPIVECQECET) are compositionally biased toward acidic residues. Residues 1295–1326 (DLGDISSFSSKASSSHHTSSGTSLSAIHSSGS) show a composition bias toward low complexity. The residue at position 1314 (serine 1314) is a Phosphoserine. Omega-N-methylarginine is present on arginine 1329. Phosphoserine is present on serine 1339. An Omega-N-methylarginine modification is found at arginine 1352. A Phosphoserine modification is found at serine 1359. Lysine 1362 is covalently cross-linked (Glycyl lysine isopeptide (Lys-Gly) (interchain with G-Cter in SUMO2)). The residue at position 1365 (serine 1365) is a Phosphoserine. The short motif at 1393–1400 (RGRGRRGR) is the GAR element. Residues serine 1423 and serine 1427 each carry the phosphoserine modification. Lysine 1431 is covalently cross-linked (Glycyl lysine isopeptide (Lys-Gly) (interchain with G-Cter in SUMO1); alternate). Lysine 1431 participates in a covalent cross-link: Glycyl lysine isopeptide (Lys-Gly) (interchain with G-Cter in SUMO2); alternate. Phosphoserine occurs at positions 1457, 1459, 1470, and 1471. Residues 1469-1478 (GSSDGLDSSS) show a composition bias toward low complexity. A tudor-like region spans residues 1481 to 1600 (NSFVGLRVVA…NRLREQYGLG (120 aa)). Residues 1492-1520 (WSSNGYFYSGKITRDVGAGKYKLLFDDGY) form an interaction with dimethylated histone H4 region. Lysine 1560 participates in a covalent cross-link: Glycyl lysine isopeptide (Lys-Gly) (interchain with G-Cter in SUMO1); alternate. Lysine 1560 is covalently cross-linked (Glycyl lysine isopeptide (Lys-Gly) (interchain with G-Cter in SUMO2); alternate). The UDR motif lies at 1601-1628 (PYEAVTPLTKAADISLDNLVEGKRKRRS). Threonine 1606 carries the phosphothreonine modification. Phosphoserine occurs at positions 1615, 1628, and 1632. Positions 1624–1715 (RKRRSNISSP…IGEPSVLEEP (92 aa)) are disordered. Residues 1631-1648 (SSPVTPTAASSSSTTPTR) are compositionally biased toward low complexity. Phosphothreonine occurs at positions 1635 and 1645. 3 positions are modified to phosphoserine: serine 1653, serine 1670, and serine 1675. Lysine 1682 is covalently cross-linked (Glycyl lysine isopeptide (Lys-Gly) (interchain with G-Cter in ubiquitin)). Phosphoserine is present on residues serine 1698 and serine 1756. 2 consecutive BRCT domains span residues 1749–1845 (LDGP…NYLL) and 1861–1961 (PREN…QHPK).

In terms of assembly, homoligomer. Interacts with p53/TP53 (via the central domain). Interacts with DCLRE1C. Interacts with histone H2AX and this requires phosphorylation of H2AX on 'Ser-139'. Interacts with histone H4 that has been dimethylated at 'Lys-20' (H4K20me2). Has low affinity for histone H4 containing monomethylated 'Lys-20' (H4K20me1). Does not bind histone H4 containing unmethylated or trimethylated 'Lys-20' (H4K20me3). Has low affinity for histone H3 that has been dimethylated on 'Lys-79'. Has very low affinity for histone H3 that has been monomethylated on 'Lys-79' (in vitro). Does not bind unmethylated histone H3. Interacts with histone H2A monoubiquitinated at 'Lys-15' (H2AK15Ub). Interacts with PWWP3A/EXPAND1. Interacts with CHEK2; modulates CHEK2 phosphorylation at 'Thr-68' in response to infrared. Interacts with MSL1; this interaction may be required for MSL1 DNA repair activity, but not for histone acetyltransferase activity. Interacts (when phosphorylated by ATM) with RIF1. Interacts (via the Tudor-like domain) with NUDT16L1/TIRR; interaction masks the Tudor-like domain and prevents recruitment to chromatin. Interacts with PAXIP1. Interacts with IFI202A. Interacts with SHLD2. Interacts (when phosphorylated) with TOPBP1. Interacts with GFI1; promoting methylation by PRMT1. Interacts with (phosphorylated) DYNLL1; specifically binds DYNLL1 phosphorylated at 'Ser-88' and promotes its recruitment to double stand breaks (DSBs). Post-translationally, phosphorylated at basal level in the absence of DNA damage. Phosphorylated by ATM in response to DNA damage: phosphorylation at different sites promotes interaction with different set of proteins: phosphorylation at the N-terminus by ATM (residues from 11-181) promotes interaction with PAXIP1 and non-homologous end joining (NHEJ) of dysfunctional telomeres. Phosphorylation by ATM at residues that are located more C-terminus (residues 300-650) leads to promote interaction with RIF1. Interaction with RIF1 leads to disrupt interaction with NUDT16L1/TIRR. Phosphorylation at Thr-1606 and Ser-1615 in the UDR motif blocks interaction with H2AK15ub. Dephosphorylated by PPP4C. Hyperphosphorylation during mitosis correlates with its exclusion from chromatin and DNA lesions. Hyperphosphorylated in an ATR-dependent manner in response to DNA damage induced by UV irradiation. Dephosphorylated by PPP5C. Phosphorylation at Ser-368 and Thr-662 promotes interaction with TOPBP1. Phosphorylated by VRK1. Asymmetrically dimethylated on Arg residues by PRMT1. Methylation is required for DNA binding. In terms of processing, monoubiquitinated at Lys-1682 by MSL2 is reponse to DNA damage, leading to its stabilization.

The protein resides in the nucleus. It localises to the chromosome. The protein localises to the centromere. It is found in the kinetochore. Its function is as follows. Double-strand break (DSB) repair protein involved in response to DNA damage, telomere dynamics and class-switch recombination (CSR) during antibody genesis. Plays a key role in the repair of double-strand DNA breaks (DSBs) in response to DNA damage by promoting non-homologous end joining (NHEJ)-mediated repair of DSBs and specifically counteracting the function of the homologous recombination (HR) repair protein BRCA1. In response to DSBs, phosphorylation by ATM promotes interaction with RIF1 and dissociation from NUDT16L1/TIRR, leading to recruitment to DSBs sites. Recruited to DSBs sites by recognizing and binding histone H2A monoubiquitinated at 'Lys-15' (H2AK15Ub) and histone H4 dimethylated at 'Lys-20' (H4K20me2), two histone marks that are present at DSBs sites. Required for immunoglobulin class-switch recombination (CSR) during antibody genesis, a process that involves the generation of DNA DSBs. Participates in the repair and the orientation of the broken DNA ends during CSR. In contrast, it is not required for classic NHEJ and V(D)J recombination. Promotes NHEJ of dysfunctional telomeres. This is TP53-binding protein 1 from Mus musculus (Mouse).